Reading from the N-terminus, the 202-residue chain is MAETAASRTGSVARKTNETSISVSVNLDGTGKSKISTGVGFFDHMLDQLSRHSLIDMEIEAKGDLHIDDHHTVEDTGIAIGQAISKALGDRRGITRYASIDLAMDETMTKAAVDLSGRPFLVWNVAFSAPKIGTFDTELVREFFQALAQNAGITLHLLNHYGANNHHIAETCFKAVARALRTATEIDPRQAGRVPSTKGTLV.

This sequence belongs to the imidazoleglycerol-phosphate dehydratase family.

It localises to the cytoplasm. It carries out the reaction D-erythro-1-(imidazol-4-yl)glycerol 3-phosphate = 3-(imidazol-4-yl)-2-oxopropyl phosphate + H2O. It participates in amino-acid biosynthesis; L-histidine biosynthesis; L-histidine from 5-phospho-alpha-D-ribose 1-diphosphate: step 6/9. This chain is Imidazoleglycerol-phosphate dehydratase, found in Rhizobium etli (strain ATCC 51251 / DSM 11541 / JCM 21823 / NBRC 15573 / CFN 42).